The chain runs to 1239 residues: DNA-directed RNA polymerase subunit beta (1239 aa).

Residues 1182–1239 are disordered; sequence IEGAENQLEDKEEKEEEKEENYKEDSDEYDDLREEDVEPDLEELSLDDLDLDDFGDEH. 2 stretches are compositionally biased toward acidic residues: residues 1191 to 1200 and 1206 to 1239; these read DKEEKEEEKE and DSDE…GDEH.

The protein belongs to the RNA polymerase beta chain family. As to quaternary structure, the RNAP catalytic core consists of 2 alpha, 1 beta, 1 beta' and 1 omega subunit. When a sigma factor is associated with the core the holoenzyme is formed, which can initiate transcription.

It catalyses the reaction RNA(n) + a ribonucleoside 5'-triphosphate = RNA(n+1) + diphosphate. Functionally, DNA-dependent RNA polymerase catalyzes the transcription of DNA into RNA using the four ribonucleoside triphosphates as substrates. This Clostridium botulinum (strain Loch Maree / Type A3) protein is DNA-directed RNA polymerase subunit beta.